The primary structure comprises 601 residues: AT-rich interactive domain-containing protein 3A (601 aa).

The disordered stretch occupies residues 1–224 (MKLQAVMETL…HMASQMPPPD (224 aa)). The span at 60-89 (MAALAAMRAAAAGLGHPSSPGGSEDGPPIS) shows a compositional bias: low complexity. Phosphoserine is present on residues serine 78, serine 82, and serine 89. At threonine 99 the chain carries Phosphothreonine. Serine 102 is modified (phosphoserine). Basic and acidic residues predominate over residues 114–123 (GHAEGDRHLM). A Phosphoserine modification is found at serine 127. Residues 128-165 (DDDDTKSKWEEQELEELGEEEEEEEEEDDFEEEEEEEE) are acidic. The segment covering 139–166 (QELEELGEEEEEEEEEDDFEEEEEEEEG) has biased composition (acidic residues). The 93-residue stretch at 243–335 (DPKRKEFLDD…YLYPYECERR (93 aa)) folds into the ARID domain. Residues serine 358 and serine 367 each carry the phosphoserine modification. Glycyl lysine isopeptide (Lys-Gly) (interchain with G-Cter in SUMO2) cross-links involve residues lysine 403, lysine 404, lysine 457, and lysine 467. The region spanning 449–546 (AALEQLREKL…GVLFAQPPPP (98 aa)) is the REKLES domain. Residues 450–493 (ALEQLREKLESTEPPEKKMALVADEQQRLMQRAVQQSFLAMTAQ) are important for nuclear localization. The segment at 495-518 (PMNIRINSQASESRQDSAVSLTSA) is homodimerization. An important for cytoplasmic localization region spans residues 542 to 562 (QPPPPTAPSAPGKGGVSSIGT). Residues 545–601 (PPTAPSAPGKGGVSSIGTNTTTGSRTGASGSTVSGGQVGLPGVSTPTMSSTSNNSLP) are disordered. Composition is skewed to low complexity over residues 559–579 (SIGTNTTTGSRTGASGSTVSG) and 588–601 (STPTMSSTSNNSLP).

Homodimer. Heterodimer with ARID3B. Interacts with E2F1. Interacts with GTF2I and BTK. As to expression, B-cell specific in the adult. Expressed in B-cell progenitors, down-regulated in the immature B-cell stage, and is up-regulated again at later stages of B-lymphocyte differentiation.

The protein resides in the nucleus. It is found in the cytoplasm. Functionally, transcription factor involved in B-cell differentiation. Binds a VH promoter proximal site necessary for induced mu-heavy-chain transcription. Binds the minor groove of a restricted ATC sequence that is sufficient for nuclear matrix association. This sequence motif is present in matrix-associating regions (MARS) proximal to the promoter and flanking E mu. Activates E mu-driven transcription by binding these sites. May be involved in the control of cell cycle progression by the RB1/E2F1 pathway. This chain is AT-rich interactive domain-containing protein 3A (Arid3a), found in Mus musculus (Mouse).